The primary structure comprises 185 residues: MLGGELLKYKSSKESHILINENINFPCVRVVDVTGKQLGILDTRQAVEYAKNQGVDLVLVNEISDPPVCKLIDYGKHKFIVEKRVKEGRKKQSGALVKEVKMTYKINEHDYETRLNQAFKFLKSGNKVKVTLTFKGREIQHLSLGTMLLNRLMTDLQQIAEVKRSPYQDGKTMILILTPKIVDPQ.

The protein belongs to the IF-3 family. As to quaternary structure, monomer.

It localises to the plastid. Its subcellular location is the chloroplast. In terms of biological role, IF-3 binds to the 30S ribosomal subunit and shifts the equilibrium between 70S ribosomes and their 50S and 30S subunits in favor of the free subunits, thus enhancing the availability of 30S subunits on which protein synthesis initiation begins. This Cyanidium caldarium (Red alga) protein is Translation initiation factor IF-3, chloroplastic.